The primary structure comprises 272 residues: HMP-PP phosphatase (272 aa).

Aspartate 8 functions as the Nucleophile in the catalytic mechanism. 3 residues coordinate Mg(2+): aspartate 8, aspartate 10, and aspartate 212.

Belongs to the HAD-like hydrolase superfamily. Cof family. The cofactor is Mg(2+).

It carries out the reaction 4-amino-2-methyl-5-(diphosphooxymethyl)pyrimidine + H2O = 4-amino-2-methyl-5-(phosphooxymethyl)pyrimidine + phosphate + H(+). Functionally, catalyzes the hydrolysis of 4-amino-2-methyl-5-hydroxymethylpyrimidine pyrophosphate (HMP-PP) to 4-amino-2-methyl-5-hydroxymethylpyrimidine phosphate (HMP-P). This is HMP-PP phosphatase from Klebsiella pneumoniae (strain 342).